The sequence spans 385 residues: MPKLTDRNRDRDREKKKRRRRDDSYDDYEEEGGISGWKLGLVVGVIVVCFAMLYPTLFHPMLMGFLGRSSQPAPSINQQRPPIHPAMGGGGGQRHPGGYPSRPDVHPAMRMAQAQAEGQSGGSKGMFTWMLPIYTIGVVLFLLYTLFKSKGKKAKRKKRNYFDSEDDSEDSEMETKYGGKFGKKKLKGLQERLRQTEDAMSKILEQLESVQAGANPVDLDAADKLALELEEDKSAKEAVGLTETNEQYIKDLEVALKEFQSLSKAYDKEKMKKLKRKDSSSEEEEEEEEEEEEEEEELSELSEVEEEEEEKPVKKGKKVVDQKKPAKKAILRQKSTSEEEEETRIADKKAEEEEEEGIDIDFEIREHAERNKKDKNLRRRRPKKT.

A compositionally biased stretch (basic and acidic residues) spans 1–13; sequence MPKLTDRNRDRDR. Residues 1 to 31 form a disordered region; the sequence is MPKLTDRNRDRDREKKKRRRRDDSYDDYEEE. The tract at residues 32-152 is sufficient for function in acetylcholine receptor folding; the sequence is GGISGWKLGL…LYTLFKSKGK (121 aa). Residues 39–59 form a helical membrane-spanning segment; the sequence is LGLVVGVIVVCFAMLYPTLFH. The disordered stretch occupies residues 72–105; that stretch reads PAPSINQQRPPIHPAMGGGGGQRHPGGYPSRPDV. The helical transmembrane segment at 127–147 threads the bilayer; that stretch reads FTWMLPIYTIGVVLFLLYTLF. Disordered stretches follow at residues 157 to 176 and 269 to 385; these read KKRN…METK and EKMK…PKKT. Acidic residues-rich tracts occupy residues 163–172, 281–310, and 352–361; these read DSEDDSEDSE, SEEE…EEEE, and EEEEEGIDID. The segment covering 362-374 has biased composition (basic and acidic residues); that stretch reads FEIREHAERNKKD. Basic residues predominate over residues 375-385; sequence KNLRRRRPKKT.

Belongs to the ric-3 family. In terms of assembly, interacts with the deg-3/des-2 acetylcholine receptor.

It localises to the endoplasmic reticulum membrane. Required for maturation and cell surface expression of acetylcholine receptors. This Caenorhabditis briggsae protein is Resistance to inhibitors of cholinesterase protein 3 (ric-3).